A 1057-amino-acid chain; its full sequence is mRNA export factor elf1 (1057 aa).

ABC transporter domains are found at residues 440–659 (IEEE…VKPE) and 692–1019 (LKMT…KKKL). ATP-binding positions include 477-484 (GHNGCGKS) and 726-733 (GPNGAGKS). Ser-733 carries the phosphoserine modification. Residues 820–869 (RRVEALIGRQKLKKSFQYEIKWFGKPHKYNTWVSREILLENGFQKFVQAF) form the Chromo domain. Basic and acidic residues predominate over residues 1020 to 1036 (TRNEIKAKERRAREREL). Residues 1020-1057 (TRNEIKAKERRARERELAWLQSPKGTEKPKSFFSDDEE) are disordered. Residues Ser-1041 and Ser-1053 each carry the phosphoserine modification.

This sequence belongs to the ABC transporter superfamily. ABCF family. EF3 subfamily.

Its subcellular location is the cytoplasm. It localises to the nucleus. Functionally, has a direct role in the mRNA export process. Appears to act within the rae1 mediated mRNA export pathway. The chain is mRNA export factor elf1 (elf1) from Schizosaccharomyces pombe (strain 972 / ATCC 24843) (Fission yeast).